A 391-amino-acid chain; its full sequence is 1-deoxy-D-xylulose 5-phosphate reductoisomerase (391 aa).

Thr-17, Gly-18, Ser-19, Ile-20, Asn-47, and Asn-130 together coordinate NADPH. Residue Lys-131 participates in 1-deoxy-D-xylulose 5-phosphate binding. Glu-132 is a binding site for NADPH. Asp-156 provides a ligand contact to Mn(2+). 4 residues coordinate 1-deoxy-D-xylulose 5-phosphate: Ser-157, Glu-158, Ser-182, and His-205. Glu-158 contacts Mn(2+). Residue Gly-211 coordinates NADPH. The 1-deoxy-D-xylulose 5-phosphate site is built by Ser-218, Asn-223, Lys-224, and Glu-227. Glu-227 serves as a coordination point for Mn(2+).

The protein belongs to the DXR family. Mg(2+) serves as cofactor. It depends on Mn(2+) as a cofactor.

The enzyme catalyses 2-C-methyl-D-erythritol 4-phosphate + NADP(+) = 1-deoxy-D-xylulose 5-phosphate + NADPH + H(+). It functions in the pathway isoprenoid biosynthesis; isopentenyl diphosphate biosynthesis via DXP pathway; isopentenyl diphosphate from 1-deoxy-D-xylulose 5-phosphate: step 1/6. In terms of biological role, catalyzes the NADPH-dependent rearrangement and reduction of 1-deoxy-D-xylulose-5-phosphate (DXP) to 2-C-methyl-D-erythritol 4-phosphate (MEP). The sequence is that of 1-deoxy-D-xylulose 5-phosphate reductoisomerase from Sinorhizobium fredii (strain NBRC 101917 / NGR234).